The sequence spans 254 residues: MPVSRIAVGAPGELSHPDTAKAAVAEFISTLIFVFAGSGSGMAFSKLTDGGAATPAGLIAASLAHALALFVAVSVGANISGGHVNPAVTFGAFVGGNISLLKALVYWVAQLLGSVVACLLLKIATGGAALGAFSLSAGVGAMNAVVLEMVMTFGLVYTVYATAVDPKKGDLGVIAPIAIGFIVGANILAGGAFDGASMNPAVSFGPAVVTGVWENHWVYWVGPLAGAAIAALVYDIIFIGQRPHQQLPTTAADY.

A run of 2 helical transmembrane segments spans residues 24-44 (VAEF…GMAF) and 56-76 (AGLI…VSVG). Residues 85–87 (NPA) carry the NPA 1 motif. 3 consecutive transmembrane segments (helical) span residues 103-123 (ALVY…LLKI), 144-164 (AVVL…ATAV), and 173-193 (VIAP…GGAF). An NPA 2 motif is present at residues 199–201 (NPA). The chain crosses the membrane as a helical span at residues 220 to 240 (WVGPLAGAAIAALVYDIIFIG).

Belongs to the MIP/aquaporin (TC 1.A.8) family. TIP (TC 1.A.8.10) subfamily.

It localises to the vacuole membrane. Its function is as follows. Aquaporins facilitate the transport of water and small neutral solutes across cell membranes. This chain is Aquaporin TIP1-2 (TIP1-2), found in Zea mays (Maize).